We begin with the raw amino-acid sequence, 333 residues long: Protein XAP5 CIRCADIAN TIMEKEEPER (333 aa).

Coiled coils occupy residues 12 to 43 and 70 to 116; these read AQDA…SDGQ and TREQ…VRGD. The segment covering 89 to 98 has biased composition (basic and acidic residues); sequence EKEKLQKLQQ. Residues 89 to 171 form a disordered region; sequence EKEKLQKLQQ…REREAEEQAE (83 aa). Positions 123 to 136 are enriched in acidic residues; it reads DEIENGSDEDEFEN. A compositionally biased stretch (basic and acidic residues) spans 160-171; that stretch reads PDREREAEEQAE.

Belongs to the FAM50 family.

Its subcellular location is the nucleus. Functionally, involved in light regulation of the circadian clock and photomorphogenesis. This chain is Protein XAP5 CIRCADIAN TIMEKEEPER (XCT), found in Oryza sativa subsp. indica (Rice).